A 120-amino-acid chain; its full sequence is Large ribosomal subunit protein uL18 (120 aa).

The protein belongs to the universal ribosomal protein uL18 family. As to quaternary structure, part of the 50S ribosomal subunit; part of the 5S rRNA/L5/L18/L25 subcomplex. Contacts the 5S and 23S rRNAs.

In terms of biological role, this is one of the proteins that bind and probably mediate the attachment of the 5S RNA into the large ribosomal subunit, where it forms part of the central protuberance. This chain is Large ribosomal subunit protein uL18, found in Staphylococcus haemolyticus (strain JCSC1435).